The sequence spans 229 residues: Platelet-activating factor acetylhydrolase IB subunit alpha2 (229 aa).

Active-site residues include Ser-48, Asp-193, and His-196.

This sequence belongs to the 'GDSL' lipolytic enzyme family. Platelet-activating factor acetylhydrolase IB beta/gamma subunits subfamily. Forms a catalytic dimer which is either homodimer (alpha2/alpha2 homodimer) or heterodimer with PAFAH1B3 (alpha2/alpha1 heterodimer). Component of the cytosolic (PAF-AH (I)) heterotetrameric enzyme, which is composed of PAFAH1B1 (beta), PAFAH1B2 (alpha2) and PAFAH1B3 (alpha1) subunits. The catalytic activity of the enzyme resides in the alpha1 (PAFAH1B3) and alpha2 (PAFAH1B2) subunits, whereas the beta subunit (PAFAH1B1) has regulatory activity. Trimer formation is not essential for the catalytic activity.

The protein localises to the cytoplasm. It catalyses the reaction a 1-O-alkyl-2-acetyl-sn-glycero-3-phosphocholine + H2O = a 1-O-alkyl-sn-glycero-3-phosphocholine + acetate + H(+). The enzyme catalyses 1-O-hexadecyl-2-acetyl-sn-glycero-3-phosphocholine + H2O = 1-O-hexadecyl-sn-glycero-3-phosphocholine + acetate + H(+). It carries out the reaction 1-O-hexadecyl-2-acetyl-sn-glycero-3-phosphate + H2O = 1-O-hexadecyl-sn-glycero-3-phosphate + acetate + H(+). The catalysed reaction is 1-O-hexadecyl-2-acetyl-sn-glycero-3-phosphoethanolamine + H2O = 1-O-hexadecyl-sn-glycero-3-phosphoethanolamine + acetate + H(+). In terms of biological role, alpha2 catalytic subunit of the cytosolic type I platelet-activating factor (PAF) acetylhydrolase (PAF-AH (I)) heterotetrameric enzyme that catalyzes the hydrolyze of the acetyl group at the sn-2 position of PAF and its analogs and modulates the action of PAF. This chain is Platelet-activating factor acetylhydrolase IB subunit alpha2 (PAFAH1B2), found in Gallus gallus (Chicken).